The sequence spans 255 residues: 4-hydroxy-tetrahydrodipicolinate reductase (255 aa).

Residues 9 to 14, Asp35, 89 to 91, and 115 to 118 each bind NAD(+); these read GFKGKM, GTT, and APNF. The active-site Proton donor/acceptor is His145. A (S)-2,3,4,5-tetrahydrodipicolinate-binding site is contributed by His146. Lys149 (proton donor) is an active-site residue. 155–156 is a (S)-2,3,4,5-tetrahydrodipicolinate binding site; sequence GT.

The protein belongs to the DapB family.

Its subcellular location is the cytoplasm. It catalyses the reaction (S)-2,3,4,5-tetrahydrodipicolinate + NAD(+) + H2O = (2S,4S)-4-hydroxy-2,3,4,5-tetrahydrodipicolinate + NADH + H(+). The enzyme catalyses (S)-2,3,4,5-tetrahydrodipicolinate + NADP(+) + H2O = (2S,4S)-4-hydroxy-2,3,4,5-tetrahydrodipicolinate + NADPH + H(+). It participates in amino-acid biosynthesis; L-lysine biosynthesis via DAP pathway; (S)-tetrahydrodipicolinate from L-aspartate: step 4/4. In terms of biological role, catalyzes the conversion of 4-hydroxy-tetrahydrodipicolinate (HTPA) to tetrahydrodipicolinate. This Streptococcus pneumoniae serotype 4 (strain ATCC BAA-334 / TIGR4) protein is 4-hydroxy-tetrahydrodipicolinate reductase.